Here is a 382-residue protein sequence, read N- to C-terminus: Protein phosphatase 1A (382 aa).

Glycine 2 carries N-myristoyl glycine lipidation. Residues 23–291 (RYGLSSMQGW…DNMSVILICF (269 aa)) enclose the PPM-type phosphatase domain. Mn(2+) contacts are provided by aspartate 60, glycine 61, aspartate 239, and aspartate 282. Phosphoserine is present on residues serine 375 and serine 377.

The protein belongs to the PP2C family. Monomer. Interacts with SMAD2; the interaction dephosphorylates SMAD2 in its C-terminal SXS motif resulting in disruption of the SMAD2/SMAD4 complex, SMAD2 nuclear export and termination of the TGF-beta-mediated signaling. Interacts with SMAD2; the interaction dephosphorylates SMAD2 in its C-terminal SXS motif resulting in disruption of the SMAD2/SMAD4 complex, SMAD2 nuclear export and termination of the TGF-beta-mediated signaling. Interacts with the phosphorylated form of IKBKB/IKKB. The cofactor is Mg(2+). Mn(2+) is required as a cofactor. In terms of processing, N-myristoylation is essential for the recognition of its substrates for dephosphorylation.

It localises to the nucleus. It is found in the cytoplasm. The protein resides in the cytosol. Its subcellular location is the membrane. It carries out the reaction O-phospho-L-seryl-[protein] + H2O = L-seryl-[protein] + phosphate. It catalyses the reaction O-phospho-L-threonyl-[protein] + H2O = L-threonyl-[protein] + phosphate. Functionally, enzyme with a broad specificity. Negatively regulates TGF-beta signaling through dephosphorylating SMAD2 and SMAD3, resulting in their dissociation from SMAD4, nuclear export of the SMADs and termination of the TGF-beta-mediated signaling. Dephosphorylates PRKAA1 and PRKAA2. Plays an important role in the termination of TNF-alpha-mediated NF-kappa-B activation through dephosphorylating and inactivating IKBKB/IKKB. The polypeptide is Protein phosphatase 1A (Ppm1a) (Mus musculus (Mouse)).